Reading from the N-terminus, the 485-residue chain is Warthog protein 1 (485 aa).

The signal sequence occupies residues 1–21; it reads MMVMNPLTATFLAALIGTAAS. Residues 236 to 258 form a disordered region; it reads DQRLSPSTDVQSDSYVSPTEADP. A compositionally biased stretch (polar residues) spans 239-252; the sequence is LSPSTDVQSDSYVS.

Belongs to the hedgehog family. Post-translationally, the C-terminal domain displays an autoproteolysis activity.

Its subcellular location is the secreted. The protein resides in the cell surface. It localises to the cell membrane. The protein localises to the extracellular space. Intercellular signal essential for a variety of patterning events during development. In Caenorhabditis elegans, this protein is Warthog protein 1 (wrt-1).